The following is a 61-amino-acid chain: Probable tautomerase lmo2564 (61 aa).

Pro2 acts as the Proton acceptor; via imino nitrogen in catalysis.

The protein belongs to the 4-oxalocrotonate tautomerase family.

The sequence is that of Probable tautomerase lmo2564 from Listeria monocytogenes serovar 1/2a (strain ATCC BAA-679 / EGD-e).